Consider the following 239-residue polypeptide: Ribonuclease HII (239 aa).

An RNase H type-2 domain is found at 18–231 (KIIVGLDEAG…SKNLLKEIEE (214 aa)). Residues D24, E25, and D125 each contribute to the a divalent metal cation site.

Belongs to the RNase HII family. Mn(2+) serves as cofactor. The cofactor is Mg(2+).

The protein resides in the cytoplasm. The catalysed reaction is Endonucleolytic cleavage to 5'-phosphomonoester.. Its function is as follows. Endonuclease that specifically degrades the RNA of RNA-DNA hybrids. In Methanococcus maripaludis (strain C6 / ATCC BAA-1332), this protein is Ribonuclease HII.